We begin with the raw amino-acid sequence, 387 residues long: Mannitol-1-phosphate 5-dehydrogenase (387 aa).

3–14 provides a ligand contact to NAD(+); it reads ALHFGAGNIGRG.

This sequence belongs to the mannitol dehydrogenase family.

The enzyme catalyses D-mannitol 1-phosphate + NAD(+) = beta-D-fructose 6-phosphate + NADH + H(+). This Yersinia pseudotuberculosis serotype O:3 (strain YPIII) protein is Mannitol-1-phosphate 5-dehydrogenase.